Consider the following 76-residue polypeptide: Protein sprouty homolog 1 (76 aa).

The region spanning 1–52 (NPCSCSQSHCCSRYLCMGAMSLFLPCLLCYPPAKGCLKLCRGCYDRVNRPGC) is the SPR domain.

It belongs to the sprouty family. In terms of tissue distribution, brain and interlimb region.

The protein resides in the cytoplasm. It localises to the membrane. Functionally, inhibits fibroblast growth factor (FGF)-induced retinal lens fiber differentiation. Inhibits TGFB-induced epithelial-to-mesenchymal transition in lens epithelial cells. The sequence is that of Protein sprouty homolog 1 (SPRY1) from Gallus gallus (Chicken).